The primary structure comprises 172 residues: C-phycocyanin beta chain (172 aa).

Asn-72 is modified (N4-methylasparagine). (2R,3E)-phycocyanobilin is bound by residues Cys-82 and Cys-153.

This sequence belongs to the phycobiliprotein family. As to quaternary structure, heterodimer of an alpha and a beta subunit, which further assembles into trimers and the trimers into hexamers. The basic functional unit of phycobiliproteins is a ring-shaped hexamer formed from two back-to-back trimers contacting via the alpha chain subunits. The trimers are composed of alpha/beta subunit heterodimers arranged around a three-fold axis of symmetry. The phycoerythrins also contain a gamma subunit which is located in the center of the hexamer. In terms of processing, contains two covalently linked bilin chromophores.

Its subcellular location is the plastid. The protein resides in the chloroplast thylakoid membrane. In terms of biological role, light-harvesting photosynthetic bile pigment-protein from the phycobiliprotein complex (phycobilisome, PBS). Phycocyanin is the major phycobiliprotein in the PBS rod. This is C-phycocyanin beta chain (cpcB) from Aglaothamnion neglectum (Red alga).